A 667-amino-acid polypeptide reads, in one-letter code: DNA ligase (667 aa).

Residues 32 to 36 (DKDYD) and 80 to 81 (SL) contribute to the NAD(+) site. Lys-121 acts as the N6-AMP-lysine intermediate in catalysis. Residues Arg-143, Glu-178, and Lys-314 each contribute to the NAD(+) site. The Zn(2+) site is built by Cys-407, Cys-410, Cys-423, and Cys-429. Residues 587–667 (IVESIFKDKT…EFEKMLGRES (81 aa)) form the BRCT domain.

It belongs to the NAD-dependent DNA ligase family. LigA subfamily. Requires Mg(2+) as cofactor. It depends on Mn(2+) as a cofactor.

The enzyme catalyses NAD(+) + (deoxyribonucleotide)n-3'-hydroxyl + 5'-phospho-(deoxyribonucleotide)m = (deoxyribonucleotide)n+m + AMP + beta-nicotinamide D-nucleotide.. Functionally, DNA ligase that catalyzes the formation of phosphodiester linkages between 5'-phosphoryl and 3'-hydroxyl groups in double-stranded DNA using NAD as a coenzyme and as the energy source for the reaction. It is essential for DNA replication and repair of damaged DNA. The polypeptide is DNA ligase (Clostridium botulinum (strain Eklund 17B / Type B)).